Here is a 132-residue protein sequence, read N- to C-terminus: Inactive D-aminoacyl-tRNA deacylase (132 aa).

It belongs to the DTD family.

A non-functional D-aminoacyl-tRNA deacylase. The chain is Inactive D-aminoacyl-tRNA deacylase from Bacillus subtilis (strain 168).